Here is a 64-residue protein sequence, read N- to C-terminus: Large ribosomal subunit protein bL35 (64 aa).

Residues 22-44 (IMKQQAGMRHNLEVKSSKRKARL) form a disordered region.

It belongs to the bacterial ribosomal protein bL35 family.

This chain is Large ribosomal subunit protein bL35, found in Clavibacter sepedonicus (Clavibacter michiganensis subsp. sepedonicus).